We begin with the raw amino-acid sequence, 481 residues long: ATP synthase subunit beta, chloroplastic (481 aa).

162–169 (GGAGVGKT) contributes to the ATP binding site.

It belongs to the ATPase alpha/beta chains family. F-type ATPases have 2 components, CF(1) - the catalytic core - and CF(0) - the membrane proton channel. CF(1) has five subunits: alpha(3), beta(3), gamma(1), delta(1), epsilon(1). CF(0) has four main subunits: a(1), b(1), b'(1) and c(9-12).

It is found in the plastid. Its subcellular location is the chloroplast thylakoid membrane. It catalyses the reaction ATP + H2O + 4 H(+)(in) = ADP + phosphate + 5 H(+)(out). Produces ATP from ADP in the presence of a proton gradient across the membrane. The catalytic sites are hosted primarily by the beta subunits. In Oltmannsiellopsis viridis (Marine flagellate), this protein is ATP synthase subunit beta, chloroplastic.